The primary structure comprises 151 residues: HTH-type transcriptional regulator FL11 (151 aa).

Positions 5–66 (LDDIDKKIIE…VVNPEALGYN (62 aa)) constitute an HTH asnC-type domain. The H-T-H motif DNA-binding region spans 24–43 (LREISKITGLAESTIHERIK). L-arginine is bound at residue 98–104 (ETTGDYD). Residues N118, D122, and 133-135 (THT) contribute to the L-lysine site. L-arginine-binding positions include D122 and 133–135 (THT).

As to quaternary structure, homodimer. Binds DNA as a dimer and an octamer.

In the famine mode, FL11 forms dimers and acts as a repressor, leading to growth arrest. In the feast mode, in the presence of high concentrations of lysine or arginine, four dimers assemble into an octamer and cover the fl11 and lysine biosynthesis promoters. This leads to the inhibition of fl11 expression and lysine biosynthesis, decrease of the FL11 concentration in the cell, derepression of the target genes and activation of the metabolism. Functionally, DNA-binding protein involved in the repression of transcription of a large number of genes, thereby arresting growth, in response to environmental changes. This chain is HTH-type transcriptional regulator FL11, found in Pyrococcus furiosus (strain ATCC 43587 / DSM 3638 / JCM 8422 / Vc1).